We begin with the raw amino-acid sequence, 382 residues long: Guanine nucleotide-binding protein G(s) subunit alpha (382 aa).

Positions 1-14 (MGCFGSPTSKQSDV) are enriched in polar residues. Positions 1 to 31 (MGCFGSPTSKQSDVNSEDSKSQKRRSDAISR) are disordered. Gly2 is lipidated: N-palmitoyl glycine. Cys3 is lipidated: S-palmitoyl cysteine. Over residues 17 to 31 (EDSKSQKRRSDAISR) the composition is skewed to basic and acidic residues. One can recognise a G-alpha domain in the interval 42–382 (ATHRLLLLGA…RMHLRQYELL (341 aa)). The tract at residues 45-58 (RLLLLGAGESGKST) is G1 motif. GTP contacts are provided by residues 50–57 (GAGESGKS), 51–58 (AGESGKST), 186–192 (LRCRVLT), 211–215 (DVGGQ), 212–216 (VGGQR), 280–283 (NKQD), 281–284 (KQDL), and Ala354. Ser57 and Thr192 together coordinate Mg(2+). The interval 184–192 (DILRCRVLT) is G2 motif. The interval 207 to 216 (FHMFDVGGQR) is G3 motif. The segment at 276-283 (ILFLNKQD) is G4 motif. The interval 352–357 (TCAVDT) is G5 motif.

The protein belongs to the G-alpha family. G(s) subfamily. In terms of assembly, g proteins are composed of 3 units; alpha, beta and gamma. The alpha chain contains the guanine nucleotide binding site.

Its function is as follows. Guanine nucleotide-binding proteins (G proteins) are involved as modulators or transducers in various transmembrane signaling systems. The G(s) protein is involved in hormonal regulation of adenylate cyclase: it activates the cyclase. The protein is Guanine nucleotide-binding protein G(s) subunit alpha (G-salpha60A) of Drosophila pseudoobscura pseudoobscura (Fruit fly).